The following is a 494-amino-acid chain: Glycerol kinase (494 aa).

Threonine 13 is a binding site for ADP. Threonine 13, threonine 14, and serine 15 together coordinate ATP. A sn-glycerol 3-phosphate-binding site is contributed by threonine 13. Arginine 17 serves as a coordination point for ADP. Residues arginine 83, glutamate 84, tyrosine 135, and aspartate 244 each coordinate sn-glycerol 3-phosphate. The glycerol site is built by arginine 83, glutamate 84, tyrosine 135, aspartate 244, and glutamine 245. Positions 266 and 309 each coordinate ADP. Positions 266, 309, 313, and 410 each coordinate ATP. Residues glycine 410 and asparagine 414 each coordinate ADP.

The protein belongs to the FGGY kinase family.

It catalyses the reaction glycerol + ATP = sn-glycerol 3-phosphate + ADP + H(+). The protein operates within polyol metabolism; glycerol degradation via glycerol kinase pathway; sn-glycerol 3-phosphate from glycerol: step 1/1. Inhibited by fructose 1,6-bisphosphate (FBP). In terms of biological role, key enzyme in the regulation of glycerol uptake and metabolism. Catalyzes the phosphorylation of glycerol to yield sn-glycerol 3-phosphate. The polypeptide is Glycerol kinase (Shewanella baltica (strain OS185)).